We begin with the raw amino-acid sequence, 35 residues long: Cytochrome b6-f complex subunit 7 (35 aa).

Residues 9-27 (AGLSIVLTLVGVALGYGIL) traverse the membrane as a helical segment.

The protein belongs to the PetM family. The 4 large subunits of the cytochrome b6-f complex are cytochrome b6, subunit IV (17 kDa polypeptide, PetD), cytochrome f and the Rieske protein, while the 4 small subunits are PetG, PetL, PetM and PetN. The complex functions as a dimer.

Its subcellular location is the cellular thylakoid membrane. Functionally, component of the cytochrome b6-f complex, which mediates electron transfer between photosystem II (PSII) and photosystem I (PSI), cyclic electron flow around PSI, and state transitions. This is Cytochrome b6-f complex subunit 7 from Synechococcus sp. (strain JA-3-3Ab) (Cyanobacteria bacterium Yellowstone A-Prime).